Reading from the N-terminus, the 973-residue chain is UvrABC system protein A (973 aa).

34–41 (GLSGSGKS) lines the ATP pocket. ABC transporter domains follow at residues 331 to 609 (WAKS…PKSL) and 629 to 958 (PKKK…QFLK). 662-669 (GVSGGGKS) serves as a coordination point for ATP. Residues 761–787 (CEACQGDGVIKIEMHFLPDVYVTCDVC) form a C4-type zinc finger.

The protein belongs to the ABC transporter superfamily. UvrA family. In terms of assembly, forms a heterotetramer with UvrB during the search for lesions.

It localises to the cytoplasm. Its function is as follows. The UvrABC repair system catalyzes the recognition and processing of DNA lesions. UvrA is an ATPase and a DNA-binding protein. A damage recognition complex composed of 2 UvrA and 2 UvrB subunits scans DNA for abnormalities. When the presence of a lesion has been verified by UvrB, the UvrA molecules dissociate. This Rhizobium meliloti (strain 1021) (Ensifer meliloti) protein is UvrABC system protein A.